The sequence spans 645 residues: Acetyl-coenzyme A synthetase (645 aa).

Residues 190-193 and threonine 308 contribute to the CoA site; that span reads RGGR. ATP is bound by residues 384 to 386, 408 to 413, aspartate 497, and arginine 512; these read GEP and DTWWQT. Serine 520 is a binding site for CoA. Arginine 523 contacts ATP. Mg(2+)-binding residues include valine 534, histidine 536, and valine 539. Lysine 606 carries the post-translational modification N6-acetyllysine.

It belongs to the ATP-dependent AMP-binding enzyme family. The cofactor is Mg(2+). Post-translationally, acetylated. Deacetylation by the SIR2-homolog deacetylase activates the enzyme.

The enzyme catalyses acetate + ATP + CoA = acetyl-CoA + AMP + diphosphate. Its function is as follows. Catalyzes the conversion of acetate into acetyl-CoA (AcCoA), an essential intermediate at the junction of anabolic and catabolic pathways. AcsA undergoes a two-step reaction. In the first half reaction, AcsA combines acetate with ATP to form acetyl-adenylate (AcAMP) intermediate. In the second half reaction, it can then transfer the acetyl group from AcAMP to the sulfhydryl group of CoA, forming the product AcCoA. The chain is Acetyl-coenzyme A synthetase from Saccharophagus degradans (strain 2-40 / ATCC 43961 / DSM 17024).